A 118-amino-acid polypeptide reads, in one-letter code: Large ribosomal subunit protein bL19 (118 aa).

Belongs to the bacterial ribosomal protein bL19 family.

Functionally, this protein is located at the 30S-50S ribosomal subunit interface and may play a role in the structure and function of the aminoacyl-tRNA binding site. This Helicobacter pylori (strain P12) protein is Large ribosomal subunit protein bL19.